The sequence spans 434 residues: Histidinol dehydrogenase (434 aa).

Residues tyrosine 129, glutamine 191, and asparagine 214 each coordinate NAD(+). Substrate contacts are provided by serine 240, glutamine 262, and histidine 265. 2 residues coordinate Zn(2+): glutamine 262 and histidine 265. Residues glutamate 329 and histidine 330 each act as proton acceptor in the active site. Positions 330, 363, 417, and 422 each coordinate substrate. A Zn(2+)-binding site is contributed by aspartate 363. Position 422 (histidine 422) interacts with Zn(2+).

Belongs to the histidinol dehydrogenase family. Requires Zn(2+) as cofactor.

The enzyme catalyses L-histidinol + 2 NAD(+) + H2O = L-histidine + 2 NADH + 3 H(+). The protein operates within amino-acid biosynthesis; L-histidine biosynthesis; L-histidine from 5-phospho-alpha-D-ribose 1-diphosphate: step 9/9. In terms of biological role, catalyzes the sequential NAD-dependent oxidations of L-histidinol to L-histidinaldehyde and then to L-histidine. In Colwellia psychrerythraea (strain 34H / ATCC BAA-681) (Vibrio psychroerythus), this protein is Histidinol dehydrogenase.